Here is a 100-residue protein sequence, read N- to C-terminus: Urease subunit gamma (100 aa).

It belongs to the urease gamma subunit family. Heterotrimer of UreA (gamma), UreB (beta) and UreC (alpha) subunits. Three heterotrimers associate to form the active enzyme.

The protein resides in the cytoplasm. It carries out the reaction urea + 2 H2O + H(+) = hydrogencarbonate + 2 NH4(+). The protein operates within nitrogen metabolism; urea degradation; CO(2) and NH(3) from urea (urease route): step 1/1. The sequence is that of Urease subunit gamma from Verminephrobacter eiseniae (strain EF01-2).